A 461-amino-acid chain; its full sequence is Transforming growth factor beta-1-induced transcript 1 protein (461 aa).

Methionine 1 carries the N-acetylmethionine modification. Residues 1 to 87 (MEDLDALLSD…PFSSSSGVLG (87 aa)) are disordered. Residues 1–200 (MEDLDALLSD…GSPSPPEPTG (200 aa)) form a transcription activation region. Residues 1 to 240 (MEDLDALLSD…CNKPIAGQVV (240 aa)) form an interaction with PTK2B/PYK2 region. An LD motif 1 motif is present at residues 3-15 (DLDALLSDLETTT). Position 33 is a phosphothreonine (threonine 33). Tyrosine 38 carries the post-translational modification Phosphotyrosine. Residues 40–52 (HQPQTGSGESSGA) show a composition bias toward polar residues. Residue tyrosine 60 is modified to Phosphotyrosine; by FAK2 and FYN. Residue serine 68 is modified to Phosphoserine. Positions 83–136 (SGVLGTGLCELDRLLQELNATQFNITDEIMSQFPSSKVASGEQKEDQSEDKKRP) are interaction with PTK2/FAK1. Residues 92–104 (ELDRLLQELNATQ) carry the LD motif 2 motif. The interval 116-152 (PSSKVASGEQKEDQSEDKKRPSLPSSPSPGLPKASAT) is disordered. The span at 124-135 (EQKEDQSEDKKR) shows a compositional bias: basic and acidic residues. A phosphoserine mark is found at serine 137, serine 140, serine 141, serine 143, serine 164, and serine 186. Residues 157 to 168 (ELDRLMASLSDF) carry the LD motif 3 motif. The segment at 172–205 (NHLPASGPTQPPVVSSTNEGSPSPPEPTGKGSLD) is disordered. Over residues 183–192 (PVVSSTNEGS) the composition is skewed to polar residues. A Phosphothreonine modification is found at threonine 188. Phosphoserine is present on residues serine 192 and serine 194. The LD motif 4 signature appears at 203–215 (SLDTMLGLLQSDL). LIM zinc-binding domains lie at 226-285 (GLCG…RFSP), 286-343 (RCGF…QLFA), 344-403 (PRCQ…RRGS), and 404-461 (LCAT…KLFG). Serine 403 bears the Phosphoserine mark. Threonine 407 bears the Phosphothreonine mark.

It belongs to the paxillin family. In terms of assembly, homooligomer. Interacts with PPARG. Interacts with TRAF4. Interacts with CRIP2. Interacts with HSPB1. Interacts with ILK. Interacts with LIMS1 and LIMS2. Interacts with NCK2. Interacts with NUDT16L1. Interacts with PAK. Interacts with PTPN12. Interacts with TCF3. Interacts with TCF7L2. Interacts with VCL. Interacts (via LD motif 3) with GIT1. Also interacts with GIT2. Forms a complex with ARHGEF7. Interacts with AR/androgen receptor in a ligand-dependent manner. Interacts with CSK. Interacts with PTK2/FAK1 and PTK2B/PYK2. Interacts with SLC6A3 and SLC6A4. Interacts with NR3C1. Interacts with SMAD3. Interacts with MAPK15. Interacts with SRC. Interacts with LYN. Interacts with talin. Interacts (via LIM zinc-binding domain 2) with CBLC (via RING-type zinc finger); the interaction is direct and enhances CBLC E3 ubiquitin-protein ligase activity. Interacts with PARVA. Interacts with PXN. In terms of processing, phosphorylated by gonadotropin-releasing hormone-activated SRC. Expressed in platelets, smooth muscle and prostate stromal cells (at protein level).

It localises to the cell junction. The protein localises to the focal adhesion. Its subcellular location is the nucleus matrix. The protein resides in the cytoplasm. It is found in the cytoskeleton. In terms of biological role, functions as a molecular adapter coordinating multiple protein-protein interactions at the focal adhesion complex and in the nucleus. Links various intracellular signaling modules to plasma membrane receptors and regulates the Wnt and TGFB signaling pathways. May also regulate SLC6A3 and SLC6A4 targeting to the plasma membrane hence regulating their activity. In the nucleus, functions as a nuclear receptor coactivator regulating glucocorticoid, androgen, mineralocorticoid and progesterone receptor transcriptional activity. May play a role in the processes of cell growth, proliferation, migration, differentiation and senescence. May have a zinc-dependent DNA-binding activity. The protein is Transforming growth factor beta-1-induced transcript 1 protein (TGFB1I1) of Homo sapiens (Human).